The primary structure comprises 162 residues: uncharacterized protein (162 aa).

The next 4 membrane-spanning stretches (helical) occupy residues 15–35 (VLAI…APAL), 43–63 (VCHF…FDLS), 70–90 (LTIL…QSFL), and 97–117 (LFDI…NILY).

It localises to the membrane. This is an uncharacterized protein from Schizosaccharomyces pombe (strain 972 / ATCC 24843) (Fission yeast).